The following is a 498-amino-acid chain: Lysine--tRNA ligase (498 aa).

The Mg(2+) site is built by glutamate 401 and glutamate 408.

This sequence belongs to the class-II aminoacyl-tRNA synthetase family. As to quaternary structure, homodimer. Mg(2+) is required as a cofactor.

The protein resides in the cytoplasm. The catalysed reaction is tRNA(Lys) + L-lysine + ATP = L-lysyl-tRNA(Lys) + AMP + diphosphate. The polypeptide is Lysine--tRNA ligase (Dehalococcoides mccartyi (strain ATCC BAA-2100 / JCM 16839 / KCTC 5957 / BAV1)).